The sequence spans 668 residues: Fructose-1,6-bisphosphatase class 3 (668 aa).

It belongs to the FBPase class 3 family. It depends on Mn(2+) as a cofactor.

The enzyme catalyses beta-D-fructose 1,6-bisphosphate + H2O = beta-D-fructose 6-phosphate + phosphate. It functions in the pathway carbohydrate biosynthesis; gluconeogenesis. The sequence is that of Fructose-1,6-bisphosphatase class 3 from Clostridium botulinum (strain Okra / Type B1).